The chain runs to 114 residues: Beta-microseminoprotein (114 aa).

The signal sequence occupies residues 1 to 20 (MNVLLGSVVIFATFVTLCNA). 5 disulfide bridges follow: Cys22/Cys70, Cys38/Cys62, Cys57/Cys93, Cys60/Cys69, and Cys84/Cys107.

The protein belongs to the beta-microseminoprotein family. In terms of assembly, homodimer; Interacts with PI16. As to expression, strongly expressed in prostate, liver, kidney, breast and penis. Also expressed in pancreas, esophagus, stomach, deodenum, colon, trachea, lung, salivary glands and fallopian tube. PSP94 is expressed in lung and breast, whereas PSP57 is found in kidney and bladder.

Its subcellular location is the secreted. The sequence is that of Beta-microseminoprotein (MSMB) from Homo sapiens (Human).